The sequence spans 641 residues: MLNNLNQPKGSTIGVLKDGRTIQQAIDGLENPVHYVKDVSITPSALLAVAVEAARLGRTVEFGPGHYTNQGQPFEVDFPLNLDVPVGTFLDFPIIIRGKTVKTVRSVATNLTAAQCPAGTTVIAGDFSAFPVGSVVGVKLGDNTNGSASYNNEAGWDFTTVAAASNTSITLSTGLRWAFDKPEVFTPEYAVRYSGQLSRSSYFIPGDYTSGLNVGDIIRVENIDGTDGVHGNKEYFEMLKVSSIDSSGITVETRLRYTHVNPWIVKTGLVKGSSVTGGGRLKRLEVRGVDTPKVNNVDVDRLIVGLCYNIDVGEITSRGVGEPSSVNFTFCFGRGFLYNVRASGSVSTTDNSALKLMSCPGLIINNCSPHNSTSTGSQGDYGFYVDAYYSPYWCWNDGMSINGIVTETPRSAVTRALWLFGLRGCSVSNLSGAQVFLQGCAKSVFSNIVTPDNLLELRDLSGCIVSGMANNALVLGCWNSTFDLTLFGIGSGSNLNIALRAGAGVTHPETGVPTTLGKNNTFNVKSFSQSSLAVTLSIAQQERPIFGAGCVDVDSANKSVALGSNVIVPTMLPLALTKGIDSGSGWVGGRTKGGIWFDGNYRDAAVRWNGQYVWVADNGSLKAAPTKPDSDSPSNGVVIGP.

This sequence in the N-terminal section; belongs to the Przondovirus depolymerase 2 family. As to quaternary structure, homotrimer. Interacts (via N-terminus) with depolymerase 1 (via N-terminus); this interaction probably gives rise to a branched tailspike.

The protein localises to the virion. Its function is as follows. Functions as a receptor binding protein (RBP) and probably mediates the attachment to the host capsular exopolysaccharides. Displays a depolymerase activity that specifically degrades some K47-type polysaccharides of Klebsiella pneumoniae capsule, which allows the phage to reach the host cell membrane and bind the entry receptor. The sequence is that of Depolymerase 1, capsule K47-specific from Klebsiella pneumoniae (Bacteriophage vB_KpnP_IME205).